Reading from the N-terminus, the 280-residue chain is Dermonecrotic toxin LsSicTox-alphaIA1 (280 aa).

Histidine 12 is an active-site residue. Mg(2+)-binding residues include glutamate 32 and aspartate 34. Catalysis depends on histidine 48, which acts as the Nucleophile. Intrachain disulfides connect cysteine 52–cysteine 58 and cysteine 54–cysteine 197. Aspartate 92 is a binding site for Mg(2+).

The protein belongs to the arthropod phospholipase D family. Class II subfamily. Mg(2+) is required as a cofactor. Expressed by the venom gland.

The protein resides in the secreted. The enzyme catalyses an N-(acyl)-sphingosylphosphocholine = an N-(acyl)-sphingosyl-1,3-cyclic phosphate + choline. It catalyses the reaction an N-(acyl)-sphingosylphosphoethanolamine = an N-(acyl)-sphingosyl-1,3-cyclic phosphate + ethanolamine. It carries out the reaction a 1-acyl-sn-glycero-3-phosphocholine = a 1-acyl-sn-glycero-2,3-cyclic phosphate + choline. The catalysed reaction is a 1-acyl-sn-glycero-3-phosphoethanolamine = a 1-acyl-sn-glycero-2,3-cyclic phosphate + ethanolamine. Functionally, dermonecrotic toxins cleave the phosphodiester linkage between the phosphate and headgroup of certain phospholipids (sphingolipid and lysolipid substrates), forming an alcohol (often choline) and a cyclic phosphate. This toxin acts on sphingomyelin (SM). It may also act on ceramide phosphoethanolamine (CPE), lysophosphatidylcholine (LPC) and lysophosphatidylethanolamine (LPE), but not on lysophosphatidylserine (LPS), and lysophosphatidylglycerol (LPG). It acts by transphosphatidylation, releasing exclusively cyclic phosphate products as second products. Induces dermonecrosis, hemolysis, increased vascular permeability, edema, inflammatory response, and platelet aggregation. This is Dermonecrotic toxin LsSicTox-alphaIA1 from Loxosceles similis (Brazilian brown spider).